The following is a 225-amino-acid chain: UPF0173 metal-dependent hydrolase PH1671 (225 aa).

The protein belongs to the UPF0173 family.

The sequence is that of UPF0173 metal-dependent hydrolase PH1671 from Pyrococcus horikoshii (strain ATCC 700860 / DSM 12428 / JCM 9974 / NBRC 100139 / OT-3).